Consider the following 216-residue polypeptide: Octanoyltransferase (216 aa).

The BPL/LPL catalytic domain occupies 24-212 (KFRKECILFL…NLCSFLEPIN (189 aa)). Substrate is bound by residues 69 to 76 (RGGDFTAH), 140 to 142 (SIG), and 153 to 155 (GIA). Cys-171 serves as the catalytic Acyl-thioester intermediate.

Belongs to the LipB family.

The protein localises to the cytoplasm. The enzyme catalyses octanoyl-[ACP] + L-lysyl-[protein] = N(6)-octanoyl-L-lysyl-[protein] + holo-[ACP] + H(+). The protein operates within protein modification; protein lipoylation via endogenous pathway; protein N(6)-(lipoyl)lysine from octanoyl-[acyl-carrier-protein]: step 1/2. Its function is as follows. Catalyzes the transfer of endogenously produced octanoic acid from octanoyl-acyl-carrier-protein onto the lipoyl domains of lipoate-dependent enzymes. Lipoyl-ACP can also act as a substrate although octanoyl-ACP is likely to be the physiological substrate. This is Octanoyltransferase from Leptospira interrogans serogroup Icterohaemorrhagiae serovar Lai (strain 56601).